The primary structure comprises 511 residues: Cobyric acid synthase (511 aa).

Residues 251 to 443 form the GATase cobBQ-type domain; that stretch reads LLDIAIICLP…IHGIFDNDVF (193 aa). The Nucleophile role is filled by cysteine 332. Histidine 435 is an active-site residue.

This sequence belongs to the CobB/CobQ family. CobQ subfamily.

It participates in cofactor biosynthesis; adenosylcobalamin biosynthesis. Its function is as follows. Catalyzes amidations at positions B, D, E, and G on adenosylcobyrinic A,C-diamide. NH(2) groups are provided by glutamine, and one molecule of ATP is hydrogenolyzed for each amidation. The protein is Cobyric acid synthase of Listeria monocytogenes serotype 4a (strain HCC23).